The sequence spans 303 residues: Protoheme IX farnesyltransferase 1 (303 aa).

The next 9 membrane-spanning stretches (helical) occupy residues 18–38 (PGIIMGNLISVAGGFLLAAQG), 42–62 (LTLMFATMIGLSLVVASGCAV), 91–111 (AVLSFGIGLGIIGFAMLAIFT), 114–134 (LAVLFAAIGYVVYVGVYSLYM), 139–159 (VYGTLVGSFSGAVPPVVGYCA), 169–189 (VILLLMFSLWQMPHSYAIAIF), 213–233 (LHIVLYIAVFAVVSALLPLAG), 235–255 (TGIAFMAVTFATSLWWLAMAL), and 274–294 (FSIITITALSVTMALDFQVVA).

This sequence belongs to the UbiA prenyltransferase family. Protoheme IX farnesyltransferase subfamily.

The protein localises to the cell inner membrane. The catalysed reaction is heme b + (2E,6E)-farnesyl diphosphate + H2O = Fe(II)-heme o + diphosphate. Its pathway is porphyrin-containing compound metabolism; heme O biosynthesis; heme O from protoheme: step 1/1. In terms of biological role, converts heme B (protoheme IX) to heme O by substitution of the vinyl group on carbon 2 of heme B porphyrin ring with a hydroxyethyl farnesyl side group. The polypeptide is Protoheme IX farnesyltransferase 1 (Shewanella frigidimarina (strain NCIMB 400)).